We begin with the raw amino-acid sequence, 250 residues long: 2,3-bisphosphoglycerate-dependent phosphoglycerate mutase (250 aa).

Residues 10–17, 23–24, R62, 89–92, K100, 116–117, and 185–186 contribute to the substrate site; these read RHGESQWN, TG, ERHY, RR, and GN. The Tele-phosphohistidine intermediate role is filled by H11. E89 functions as the Proton donor/acceptor in the catalytic mechanism.

It belongs to the phosphoglycerate mutase family. BPG-dependent PGAM subfamily. Homodimer.

It catalyses the reaction (2R)-2-phosphoglycerate = (2R)-3-phosphoglycerate. Its pathway is carbohydrate degradation; glycolysis; pyruvate from D-glyceraldehyde 3-phosphate: step 3/5. Its function is as follows. Catalyzes the interconversion of 2-phosphoglycerate and 3-phosphoglycerate. In Shigella dysenteriae serotype 1 (strain Sd197), this protein is 2,3-bisphosphoglycerate-dependent phosphoglycerate mutase.